The sequence spans 239 residues: Uridylate kinase (239 aa).

Residue 10-13 (KLSG) participates in ATP binding. The involved in allosteric activation by GTP stretch occupies residues 18–23 (GEDGYG). Glycine 52 is a UMP binding site. The ATP site is built by glycine 53 and arginine 57. Residues aspartate 72 and 133–140 (TGNPYFTT) each bind UMP. ATP contacts are provided by threonine 160, tyrosine 166, and aspartate 169.

It belongs to the UMP kinase family. Homohexamer.

Its subcellular location is the cytoplasm. The catalysed reaction is UMP + ATP = UDP + ADP. The protein operates within pyrimidine metabolism; CTP biosynthesis via de novo pathway; UDP from UMP (UMPK route): step 1/1. Allosterically activated by GTP. Inhibited by UTP. Its function is as follows. Catalyzes the reversible phosphorylation of UMP to UDP. This Chlorobium chlorochromatii (strain CaD3) protein is Uridylate kinase.